Reading from the N-terminus, the 230-residue chain is PKHD-type hydroxylase XF_0598 (230 aa).

The 105-residue stretch at 78–182 folds into the Fe2OG dioxygenase domain; it reads RTLPPRFNCY…RIASFFWVQS (105 aa). Residues His-96, Asp-98, and His-163 each contribute to the Fe cation site. Arg-173 contacts 2-oxoglutarate.

Requires Fe(2+) as cofactor. It depends on L-ascorbate as a cofactor.

This chain is PKHD-type hydroxylase XF_0598, found in Xylella fastidiosa (strain 9a5c).